A 78-amino-acid chain; its full sequence is UPF0291 protein LBUL_1264 (78 aa).

The protein belongs to the UPF0291 family.

Its subcellular location is the cytoplasm. In Lactobacillus delbrueckii subsp. bulgaricus (strain ATCC BAA-365 / Lb-18), this protein is UPF0291 protein LBUL_1264.